Here is a 377-residue protein sequence, read N- to C-terminus: tRNA-specific 2-thiouridylase MnmA (377 aa).

ATP-binding positions include 8 to 15 and methionine 34; that span reads GMSGGVDS. An interaction with target base in tRNA region spans residues 94–96; that stretch reads NPD. Cysteine 99 serves as the catalytic Nucleophile. Residues cysteine 99 and cysteine 201 are joined by a disulfide bond. Position 123 (glycine 123) interacts with ATP. The interval 151-153 is interaction with tRNA; that stretch reads KDQ. Catalysis depends on cysteine 201, which acts as the Cysteine persulfide intermediate. The interaction with tRNA stretch occupies residues 315–316; sequence RY.

This sequence belongs to the MnmA/TRMU family.

It localises to the cytoplasm. It catalyses the reaction S-sulfanyl-L-cysteinyl-[protein] + uridine(34) in tRNA + AH2 + ATP = 2-thiouridine(34) in tRNA + L-cysteinyl-[protein] + A + AMP + diphosphate + H(+). In terms of biological role, catalyzes the 2-thiolation of uridine at the wobble position (U34) of tRNA, leading to the formation of s(2)U34. This Acinetobacter baumannii (strain AB307-0294) protein is tRNA-specific 2-thiouridylase MnmA.